A 161-amino-acid chain; its full sequence is Protein-export protein SecB (161 aa).

The protein belongs to the SecB family. Homotetramer, a dimer of dimers. One homotetramer interacts with 1 SecA dimer.

Its subcellular location is the cytoplasm. In terms of biological role, one of the proteins required for the normal export of preproteins out of the cell cytoplasm. It is a molecular chaperone that binds to a subset of precursor proteins, maintaining them in a translocation-competent state. It also specifically binds to its receptor SecA. This chain is Protein-export protein SecB, found in Coxiella burnetii (strain CbuG_Q212) (Coxiella burnetii (strain Q212)).